A 530-amino-acid polypeptide reads, in one-letter code: Tegument protein UL21 homolog (530 aa).

Belongs to the alphaherpesvirinae UL21 protein family. Interacts (via C-terminus) with UL16.

It is found in the virion tegument. The protein resides in the host cytoplasm. It localises to the host nucleus. May participate in DNA packaging/capsid maturation events. Promotes efficient incorporation of tegument proteins UL46, UL49, and US3 homologs into virions. May also play a role in capsid transport to the trans-Golgi network (TGN). The chain is Tegument protein UL21 homolog from Equus caballus (Horse).